We begin with the raw amino-acid sequence, 240 residues long: Urease accessory protein UreF (240 aa).

Belongs to the UreF family. As to quaternary structure, ureD, UreF and UreG form a complex that acts as a GTP-hydrolysis-dependent molecular chaperone, activating the urease apoprotein by helping to assemble the nickel containing metallocenter of UreC. The UreE protein probably delivers the nickel.

It localises to the cytoplasm. Its function is as follows. Required for maturation of urease via the functional incorporation of the urease nickel metallocenter. The polypeptide is Urease accessory protein UreF (Bradyrhizobium sp. (strain ORS 278)).